The primary structure comprises 953 residues: Isoleucine--tRNA ligase (953 aa).

The short motif at 57–67 (PYANGDIHIGH) is the 'HIGH' region element. An L-isoleucyl-5'-AMP-binding site is contributed by Glu-582. The short motif at 623 to 627 (KMSKS) is the 'KMSKS' region element. Residue Lys-626 coordinates ATP. Residues Cys-916, Cys-919, Cys-936, and Cys-939 each coordinate Zn(2+).

Belongs to the class-I aminoacyl-tRNA synthetase family. IleS type 1 subfamily. In terms of assembly, monomer. The cofactor is Zn(2+).

It is found in the cytoplasm. The catalysed reaction is tRNA(Ile) + L-isoleucine + ATP = L-isoleucyl-tRNA(Ile) + AMP + diphosphate. In terms of biological role, catalyzes the attachment of isoleucine to tRNA(Ile). As IleRS can inadvertently accommodate and process structurally similar amino acids such as valine, to avoid such errors it has two additional distinct tRNA(Ile)-dependent editing activities. One activity is designated as 'pretransfer' editing and involves the hydrolysis of activated Val-AMP. The other activity is designated 'posttransfer' editing and involves deacylation of mischarged Val-tRNA(Ile). The sequence is that of Isoleucine--tRNA ligase from Bordetella petrii (strain ATCC BAA-461 / DSM 12804 / CCUG 43448).